A 167-amino-acid polypeptide reads, in one-letter code: uncharacterized protein (167 aa).

This is an uncharacterized protein from Magallana gigas (Pacific oyster).